The chain runs to 1227 residues: Beta-alanyl-bioamine nonribosomal peptide synthetase (1227 aa).

The adenylation stretch occupies residues 1–850 (MPQSTAQLKS…FGKNSRDFKL (850 aa)). One can recognise a Carrier domain in the interval 851–931 (SRGRERARKV…SILTSLQNTE (81 aa)). Position 892 is an O-(pantetheine 4'-phosphoryl)serine (Ser892). A condensation region spans residues 932–1227 (SDFLKTQEPF…YMIKELNPSS (296 aa)).

This sequence belongs to the NRP synthetase family. Pantetheine 4'-phosphate is required as a cofactor. In virgin and paired males, bilaterally expressed in some cells in the head. During pairing, expressed throughout the ventral side of the body probably in ciliated neurons. Highly expressed in virgin females in cells throughout the body and only weakly expressed in sexually mature females. In virgin females, expressed in some cells in the head and on the dorsal surface and lateral edges of body.

It carries out the reaction tryptamine + beta-alanine + ATP = beta-alanyl-tryptamine + AMP + diphosphate + H(+). It catalyses the reaction beta-alanine + ATP + H(+) = beta-alanyl-5'-AMP + diphosphate. The enzyme catalyses beta-alanyl-5'-AMP + holo-[peptidyl-carrier protein] = beta-alanyl-[peptidyl-carrier protein] + AMP + H(+). The catalysed reaction is beta-alanyl-[peptidyl-carrier protein] + tryptamine = beta-alanyl-tryptamine + holo-[peptidyl-carrier protein] + H(+). Catalyzes the condensation of beta-alanine with tryptamine to form beta-alanyl-tryptamine (BATT). Beta-alanyl-tryptamine is an essential pheromone produced by the male that stimulates female sexual development during pairing. The protein is Beta-alanyl-bioamine nonribosomal peptide synthetase of Schistosoma mansoni (Blood fluke).